Consider the following 1191-residue polypeptide: WASH complex subunit homolog 5 (1191 aa).

Belongs to the strumpellin family. Component of the WASH complex.

The protein localises to the early endosome. Its function is as follows. Acts at least in part as component of the WASH complex which may regulate wash nucleation-promoting factor (NPF) activity and is required for its membrane targeting during endosomal sorting. During embryogenesis, not involved in the wash-dependent developmental migration of hemocytes anteriorly from the tail. The chain is WASH complex subunit homolog 5 from Drosophila melanogaster (Fruit fly).